The sequence spans 65 residues: Small ribosomal subunit protein eS27 (65 aa).

Cysteine 20, cysteine 23, cysteine 39, and cysteine 42 together coordinate Zn(2+). The C4-type zinc-finger motif lies at 20 to 42 (CIDCGNEQIVFSHPATKVRCLVC).

This sequence belongs to the eukaryotic ribosomal protein eS27 family. Part of the 30S ribosomal subunit. It depends on Zn(2+) as a cofactor.

This chain is Small ribosomal subunit protein eS27, found in Thermococcus gammatolerans (strain DSM 15229 / JCM 11827 / EJ3).